The chain runs to 694 residues: DNA-directed RNA polymerase subunit beta' (694 aa).

Zn(2+) contacts are provided by Cys-69, Cys-71, Cys-87, and Cys-90. Mg(2+)-binding residues include Asp-489, Asp-491, and Asp-493.

Belongs to the RNA polymerase beta' chain family. RpoC1 subfamily. In terms of assembly, in plastids the minimal PEP RNA polymerase catalytic core is composed of four subunits: alpha, beta, beta', and beta''. When a (nuclear-encoded) sigma factor is associated with the core the holoenzyme is formed, which can initiate transcription. Requires Mg(2+) as cofactor. Zn(2+) serves as cofactor.

The protein localises to the plastid. The protein resides in the chloroplast. The enzyme catalyses RNA(n) + a ribonucleoside 5'-triphosphate = RNA(n+1) + diphosphate. In terms of biological role, DNA-dependent RNA polymerase catalyzes the transcription of DNA into RNA using the four ribonucleoside triphosphates as substrates. This Gossypium barbadense (Sea Island cotton) protein is DNA-directed RNA polymerase subunit beta'.